Reading from the N-terminus, the 172-residue chain is Large ribosomal subunit protein eL20 (172 aa).

This sequence belongs to the eukaryotic ribosomal protein eL20 family. Component of the large ribosomal subunit. Mature ribosomes consist of a small (40S) and a large (60S) subunit. The 40S subunit contains about 32 different proteins and 1 molecule of RNA (18S). The 60S subunit contains 45 different proteins and 3 molecules of RNA (25S, 5.8S and 5S).

Its subcellular location is the cytoplasm. In terms of biological role, component of the ribosome, a large ribonucleoprotein complex responsible for the synthesis of proteins in the cell. The small ribosomal subunit (SSU) binds messenger RNAs (mRNAs) and translates the encoded message by selecting cognate aminoacyl-transfer RNA (tRNA) molecules. The large subunit (LSU) contains the ribosomal catalytic site termed the peptidyl transferase center (PTC), which catalyzes the formation of peptide bonds, thereby polymerizing the amino acids delivered by tRNAs into a polypeptide chain. The nascent polypeptides leave the ribosome through a tunnel in the LSU and interact with protein factors that function in enzymatic processing, targeting, and the membrane insertion of nascent chains at the exit of the ribosomal tunnel. This Candida albicans (strain SC5314 / ATCC MYA-2876) (Yeast) protein is Large ribosomal subunit protein eL20.